We begin with the raw amino-acid sequence, 676 residues long: Probable ERAD-associated E3 ubiquitin-protein ligase ASI1 (676 aa).

Residues 1-78 lie on the Perinuclear space side of the membrane; that stretch reads MSTNILQHVK…TLQLAKVGIR (78 aa). 4 N-linked (GlcNAc...) asparagine glycosylation sites follow: N24, N34, N46, and N66. Residues 79–99 traverse the membrane as a helical segment; it reads MFFSYSVSKYAVLCFSTAIIL. The Nuclear portion of the chain corresponds to 100–126; the sequence is NRLTVMSSLRSNSTNIRLPLWSKTLLH. A helical transmembrane segment spans residues 127–147; it reads LVATLSLVKALLQILSQFGLM. Topologically, residues 148-156 are perinuclear space; it reads HELHVSDTD. Residues 157–177 traverse the membrane as a helical segment; the sequence is FYALSVYLFVALSDCIEIFIS. Residues 178–181 lie on the Nuclear side of the membrane; that stretch reads STTN. Residues 182–202 traverse the membrane as a helical segment; it reads VPSLICSDFSIWGLSLNLYII. The Perinuclear space portion of the chain corresponds to 203–277; it reads SKMPAGQQHI…NICLIHNYFP (75 aa). The helical transmembrane segment at 278-298 threads the bilayer; the sequence is GFFYISTILLASIGIFLKALF. Topologically, residues 299–676 are nuclear; the sequence is TSNPFRSLYS…VKGYSKLNIV (378 aa). Residues 624–664 form an RING-type; atypical zinc finger; that stretch reads CLICKVNKRNIVTWPCRCLALCDDCRISLGYKGFATCVSCD.

In terms of assembly, component of the Asi complex, which contains ASI1, ASI2 and ASI3. Interacts directly with ASI1.

It localises to the nucleus inner membrane. It carries out the reaction S-ubiquitinyl-[E2 ubiquitin-conjugating enzyme]-L-cysteine + [acceptor protein]-L-lysine = [E2 ubiquitin-conjugating enzyme]-L-cysteine + N(6)-ubiquitinyl-[acceptor protein]-L-lysine.. Part of the nuclear inner membrane (INM)-specific branch of the ER-associated degradation (ERAD) pathway, required for the elimination of misfolded proteins in the INM, a specialized ER subdomain. Required for ERG11 degradation. Negative regulator of SPS-sensor signaling. Together with ASI2 and ASI3, prevents the unprocessed precursor forms of STP1 and STP2 that escape cytoplasmic anchoring from inducing SPS-sensor-regulated genes in the absence of inducing signals. Controls amino acid permease (AAP) gene expression in response to amino acid availability, a process mediated by the transcription factors STP1 and STP1. This Saccharomyces cerevisiae (strain ATCC 204508 / S288c) (Baker's yeast) protein is Probable ERAD-associated E3 ubiquitin-protein ligase ASI1 (ASI3).